Reading from the N-terminus, the 407-residue chain is DAZ-associated protein 1 (407 aa).

M1 is subject to N-acetylmethionine. RRM domains lie at 10–97 (GKLF…RTRP) and 113–190 (NKIF…RAEP). A disordered region spans residues 74–117 (TLDGRNIDPKPCTPRGMQPERTRPKEGWQKGPRSDNSKSNKIFV). The segment covering 91–111 (QPERTRPKEGWQKGPRSDNSK) has biased composition (basic and acidic residues). K150 bears the N6-acetyllysine mark. Residues 185–194 (VKRAEPRDSK) are compositionally biased toward basic and acidic residues. The disordered stretch occupies residues 185 to 407 (VKRAEPRDSK…NVQGFHPYRR (223 aa)). The span at 195-207 (SQAPGQPGASQWG) shows a compositional bias: polar residues. Residues 247–262 (GPPPAGRGAPPPPPPF) are compositionally biased toward pro residues. R253 carries the omega-N-methylarginine modification. Over residues 280 to 294 (FPQGYGAPPQFSFGY) the composition is skewed to low complexity. The segment covering 295–315 (GPPPPPPDQFAPPGVPPPPAT) has biased composition (pro residues). Low complexity predominate over residues 364-379 (SDPSQQPPSYGGPSVP). Residues 380-393 (GSGGPPAGGSGFGR) are compositionally biased toward gly residues.

Interacts with DAZ and DAZL. In terms of processing, acetylation at Lys-150 is predominantly observed in the nuclear fraction, and may regulate nucleocytoplasmic transport. In terms of tissue distribution, mainly expressed in testis. Expressed to a lower level in thymus. Weakly or not expressed in heart, liver, brain, placenta, lung, skeletal muscle, kidney and pancreas.

It is found in the cytoplasm. The protein resides in the nucleus. RNA-binding protein, which may be required during spermatogenesis. The polypeptide is DAZ-associated protein 1 (DAZAP1) (Homo sapiens (Human)).